Reading from the N-terminus, the 308-residue chain is Aspartate carbamoyltransferase catalytic subunit (308 aa).

2 residues coordinate carbamoyl phosphate: R57 and T58. Residue K86 participates in L-aspartate binding. Positions 107, 135, and 138 each coordinate carbamoyl phosphate. 2 residues coordinate L-aspartate: R168 and R229. Carbamoyl phosphate-binding residues include L268 and P269.

This sequence belongs to the aspartate/ornithine carbamoyltransferase superfamily. ATCase family. In terms of assembly, heterooligomer of catalytic and regulatory chains.

It catalyses the reaction carbamoyl phosphate + L-aspartate = N-carbamoyl-L-aspartate + phosphate + H(+). Its pathway is pyrimidine metabolism; UMP biosynthesis via de novo pathway; (S)-dihydroorotate from bicarbonate: step 2/3. Functionally, catalyzes the condensation of carbamoyl phosphate and aspartate to form carbamoyl aspartate and inorganic phosphate, the committed step in the de novo pyrimidine nucleotide biosynthesis pathway. In Pyrococcus abyssi (strain GE5 / Orsay), this protein is Aspartate carbamoyltransferase catalytic subunit.